Here is a 399-residue protein sequence, read N- to C-terminus: Coenzyme A biosynthesis bifunctional protein CoaBC (399 aa).

Residues 1-190 (MQTLAGKKIL…FQPKVLEGKS (190 aa)) are phosphopantothenoylcysteine decarboxylase. Cysteine 159 acts as the Proton donor in catalysis. The tract at residues 191–399 (ILISAGPTRE…KILEKMRELM (209 aa)) is phosphopantothenate--cysteine ligase. Residues aspartate 279, lysine 289, 307–310 (PDIV), phenylalanine 326, lysine 340, and lysine 344 contribute to the CTP site.

It in the N-terminal section; belongs to the HFCD (homo-oligomeric flavin containing Cys decarboxylase) superfamily. In the C-terminal section; belongs to the PPC synthetase family. It depends on Mg(2+) as a cofactor. FMN serves as cofactor.

It catalyses the reaction N-[(R)-4-phosphopantothenoyl]-L-cysteine + H(+) = (R)-4'-phosphopantetheine + CO2. The catalysed reaction is (R)-4'-phosphopantothenate + L-cysteine + CTP = N-[(R)-4-phosphopantothenoyl]-L-cysteine + CMP + diphosphate + H(+). It participates in cofactor biosynthesis; coenzyme A biosynthesis; CoA from (R)-pantothenate: step 2/5. It functions in the pathway cofactor biosynthesis; coenzyme A biosynthesis; CoA from (R)-pantothenate: step 3/5. Catalyzes two sequential steps in the biosynthesis of coenzyme A. In the first step cysteine is conjugated to 4'-phosphopantothenate to form 4-phosphopantothenoylcysteine. In the second step the latter compound is decarboxylated to form 4'-phosphopantotheine. The sequence is that of Coenzyme A biosynthesis bifunctional protein CoaBC from Vibrio parahaemolyticus serotype O3:K6 (strain RIMD 2210633).